Consider the following 677-residue polypeptide: Methionine--tRNA ligase (677 aa).

The 'HIGH' region motif lies at 15–25 (PYANGSIHLGH). Positions 146, 149, 159, and 162 each coordinate Zn(2+). Positions 333-337 (KMSKS) match the 'KMSKS' region motif. Lysine 336 contributes to the ATP binding site. The tRNA-binding domain maps to 575–677 (DFAKVDLRVA…DGAKPGQQVK (103 aa)).

It belongs to the class-I aminoacyl-tRNA synthetase family. MetG type 1 subfamily. Homodimer. Requires Zn(2+) as cofactor.

The protein resides in the cytoplasm. The catalysed reaction is tRNA(Met) + L-methionine + ATP = L-methionyl-tRNA(Met) + AMP + diphosphate. Its function is as follows. Is required not only for elongation of protein synthesis but also for the initiation of all mRNA translation through initiator tRNA(fMet) aminoacylation. The protein is Methionine--tRNA ligase of Salmonella schwarzengrund (strain CVM19633).